The following is a 661-amino-acid chain: MQSFRKIWNKPRPDDWMPLARFYYADSALNDIASELDSFDGRRDPDRCNALVTRLRVAQDRVLHIITEMLIHLYPREQDRACRDFRVKFPDEILHDTLPGQLWFGAECLSAGSNIIDHETESDLIRPLAKDVTKQLDFLRDLLKNQSLRDPSAYNPVIKENLLKFDKLFAEFEYQYVSAMVPVKSVKEHDSQLDVAVLFSEVLSLALVKDLITQDLIDYCDPSVMIAIPRLGIVWGLLVYSNGALNVDVPAENLSEMFRPFYSLLVKIRNLLRILTPTELTKLETVLCKGESAVPEDTSSTLTMSDFRTNATDEEKAKNNQRVWMCDMPSDSTSSLDSSVQDSSSETTSLASSALASPHSGSEENVSQIENEEGDDEAIGTNSNSSNEVTESPETIEEPDNVDMEESSESEVDTHIDETRNESDDEITDDVQASDVLQVETKKCKSSRLLEQKKFDKSVKTIIPMQTDPRSQIDPKNLRSRFRSSEDLVHRLFVCIAGVADQLQTNYSSEIRKVLKLILQPSEIIPVYEVVNAQVANSQTEGEETGVEAQETLPLPAFMGVRWVPDEDCEQCTACSMPFNFVRRRHHCRNCGRIFCHKCSCNTISIPEHGYDRKVRVCNLCYVHRLNSFGCNEPMSQVNENGATVPSVTEQQSAQTASASS.

Residues 294-432 (VPEDTSSTLT…SDDEITDDVQ (139 aa)) form a disordered region. Polar residues predominate over residues 297 to 310 (DTSSTLTMSDFRTN). 2 stretches are compositionally biased toward low complexity: residues 330 to 360 (SDST…SPHS) and 381 to 393 (TNSN…TESP). A compositionally biased stretch (acidic residues) spans 394-411 (ETIEEPDNVDMEESSESE). Basic and acidic residues predominate over residues 412 to 422 (VDTHIDETRNE). The FYVE-type zinc-finger motif lies at 566-626 (DEDCEQCTAC…VCNLCYVHRL (61 aa)). Positions 572, 575, 588, 591, 596, 599, 618, and 621 each coordinate Zn(2+). Over residues 641–650 (NGATVPSVTE) the composition is skewed to polar residues. The interval 641 to 661 (NGATVPSVTEQQSAQTASASS) is disordered. The segment covering 651-661 (QQSAQTASASS) has biased composition (low complexity).

Belongs to the lst-2 family. Expressed in vulval precursor cells (VPCs).

Its function is as follows. Negative regulator of epidermal growth factor receptor (EGFR) signaling. This Caenorhabditis elegans protein is Lateral signaling target protein 2 (lst-2).